Consider the following 571-residue polypeptide: Proline--tRNA ligase (571 aa).

This sequence belongs to the class-II aminoacyl-tRNA synthetase family. ProS type 1 subfamily. In terms of assembly, homodimer.

It localises to the cytoplasm. The catalysed reaction is tRNA(Pro) + L-proline + ATP = L-prolyl-tRNA(Pro) + AMP + diphosphate. In terms of biological role, catalyzes the attachment of proline to tRNA(Pro) in a two-step reaction: proline is first activated by ATP to form Pro-AMP and then transferred to the acceptor end of tRNA(Pro). As ProRS can inadvertently accommodate and process non-cognate amino acids such as alanine and cysteine, to avoid such errors it has two additional distinct editing activities against alanine. One activity is designated as 'pretransfer' editing and involves the tRNA(Pro)-independent hydrolysis of activated Ala-AMP. The other activity is designated 'posttransfer' editing and involves deacylation of mischarged Ala-tRNA(Pro). The misacylated Cys-tRNA(Pro) is not edited by ProRS. This is Proline--tRNA ligase from Vibrio campbellii (strain ATCC BAA-1116).